Reading from the N-terminus, the 394-residue chain is NAC domain-containing protein 26 (394 aa).

The region spanning 7-156 is the NAC domain; it reads VPPGFRFHPT…GWVVCRVFKK (150 aa). A DNA-binding region spans residues 107–162; it reads IGMRKTLVFYKGRAPNGQKSDWIMHEYRLETSENGTPQEEGWVVCRVFKKKLAATV.

It belongs to the plant vascular related NAC-domain protein family. As to quaternary structure, interacts with NAC083/VNI2. In terms of tissue distribution, detected in root vessels of protoxylems, outermost metaxylems, inner metaxylems, shoots and hypocotyls. Expressed in roots, hypocotyls, cotyledons and leaves. Expressed in developing xylems. Specifically expressed in vessels in the secondary xylem of the root-hypocotyl region, and in vessels but not in interfascicular fibers in stems.

The protein resides in the nucleus. Its function is as follows. Transcription activator that binds to the secondary wall NAC binding element (SNBE), 5'-(T/A)NN(C/T)(T/C/G)TNNNNNNNA(A/C)GN(A/C/T)(A/T)-3', in the promoter of target genes. Involved in xylem formation by promoting the expression of secondary wall-associated transcription factors and of genes involved in secondary wall biosynthesis and programmed cell death, genes driven by the secondary wall NAC binding element (SNBE). Triggers thickening of secondary walls. This is NAC domain-containing protein 26 from Arabidopsis thaliana (Mouse-ear cress).